A 594-amino-acid polypeptide reads, in one-letter code: UvrABC system protein C (594 aa).

The 78-residue stretch at 14 to 91 (DQPGCYLMKD…IKKYDPKYNI (78 aa)) folds into the GIY-YIG domain. Positions 196-231 (KEIRSELETKMYEASEKLEFERAKELRDQIAHIDAI) constitute a UVR domain.

The protein belongs to the UvrC family. As to quaternary structure, interacts with UvrB in an incision complex.

The protein localises to the cytoplasm. In terms of biological role, the UvrABC repair system catalyzes the recognition and processing of DNA lesions. UvrC both incises the 5' and 3' sides of the lesion. The N-terminal half is responsible for the 3' incision and the C-terminal half is responsible for the 5' incision. This Bacillus mycoides (strain KBAB4) (Bacillus weihenstephanensis) protein is UvrABC system protein C.